A 168-amino-acid polypeptide reads, in one-letter code: ATP synthase subunit b (168 aa).

Residues 9-29 (SIPFGTIAYTLFIFLLLLVML) form a helical membrane-spanning segment.

It belongs to the ATPase B chain family. F-type ATPases have 2 components, F(1) - the catalytic core - and F(0) - the membrane proton channel. F(1) has five subunits: alpha(3), beta(3), gamma(1), delta(1), epsilon(1). F(0) has three main subunits: a(1), b(2) and c(10-14). The alpha and beta chains form an alternating ring which encloses part of the gamma chain. F(1) is attached to F(0) by a central stalk formed by the gamma and epsilon chains, while a peripheral stalk is formed by the delta and b chains.

The protein resides in the cell membrane. F(1)F(0) ATP synthase produces ATP from ADP in the presence of a proton or sodium gradient. F-type ATPases consist of two structural domains, F(1) containing the extramembraneous catalytic core and F(0) containing the membrane proton channel, linked together by a central stalk and a peripheral stalk. During catalysis, ATP synthesis in the catalytic domain of F(1) is coupled via a rotary mechanism of the central stalk subunits to proton translocation. In terms of biological role, component of the F(0) channel, it forms part of the peripheral stalk, linking F(1) to F(0). This chain is ATP synthase subunit b, found in Bacillus mycoides (strain KBAB4) (Bacillus weihenstephanensis).